A 313-amino-acid chain; its full sequence is Glycine--tRNA ligase alpha subunit (313 aa).

This sequence belongs to the class-II aminoacyl-tRNA synthetase family. In terms of assembly, tetramer of two alpha and two beta subunits.

The protein resides in the cytoplasm. It carries out the reaction tRNA(Gly) + glycine + ATP = glycyl-tRNA(Gly) + AMP + diphosphate. The protein is Glycine--tRNA ligase alpha subunit of Leuconostoc mesenteroides subsp. mesenteroides (strain ATCC 8293 / DSM 20343 / BCRC 11652 / CCM 1803 / JCM 6124 / NCDO 523 / NBRC 100496 / NCIMB 8023 / NCTC 12954 / NRRL B-1118 / 37Y).